A 279-amino-acid polypeptide reads, in one-letter code: MAESFVRLEHVFYKYEDTEKYAVKDVSISAQKGEWVALVGHNGSGKSTIAKLLNGLLFPEDGLIKIGHFVLSEKNIWEIRRQVGMVFQNPDNQFVGATVQDDVAFGLENHGVPHDTMVERVESALNEVGMQSYALHEPARLSGGQKQRVAIAGVLALQPDVIILDEATSMLDPRGRAEVMETIRIMREQEDITVISITHDLDEVLFADRVIVMNKGEIHSEGTPKEIFQQADAMREIGLGVPFIIELQEKLVAGGFETGSTVLSEGALLDQLWKLNSNN.

The ABC transporter domain occupies 6 to 240 (VRLEHVFYKY…ADAMREIGLG (235 aa)). 40-47 (GHNGSGKS) contacts ATP.

Belongs to the ABC transporter superfamily. Energy-coupling factor EcfA family. In terms of assembly, forms a stable energy-coupling factor (ECF) transporter complex composed of 2 membrane-embedded substrate-binding proteins (S component), 2 ATP-binding proteins (A component) and 2 transmembrane proteins (T component).

The protein localises to the cell membrane. In terms of biological role, ATP-binding (A) component of a common energy-coupling factor (ECF) ABC-transporter complex. Unlike classic ABC transporters this ECF transporter provides the energy necessary to transport a number of different substrates. The polypeptide is Energy-coupling factor transporter ATP-binding protein EcfA1 (Listeria monocytogenes serovar 1/2a (strain ATCC BAA-679 / EGD-e)).